The chain runs to 574 residues: High-affinity methionine permease (574 aa).

Over 1–61 the chain is Cytoplasmic; it reads MSEGRTFLSQ…TELDQGEKQL (61 aa). Lys28 is covalently cross-linked (Glycyl lysine isopeptide (Lys-Gly) (interchain with G-Cter in ubiquitin)). The chain crosses the membrane as a helical span at residues 62-82; sequence GILSCIGLICNRMLGTGVFAV. Residues 83-92 lie on the Extracellular side of the membrane; the sequence is SSTIYTLCGS. Residues 93 to 113 form a helical membrane-spanning segment; the sequence is VGLALIMWAVGAIIAISGLYV. Residues 114–140 lie on the Cytoplasmic side of the membrane; the sequence is YMEFGTAIPKNGGEKNYLEAIFRKPKF. A helical transmembrane segment spans residues 141 to 161; the sequence is FITCMYAAYIFFLGWAAGNSI. At 162–182 the chain is on the extracellular side; it reads NTAIMFLTAADTEVTKWNQRG. The chain crosses the membrane as a helical span at residues 183–203; the sequence is IGVAVVFFAFLINSLNVKIGL. Over 204–207 the chain is Cytoplasmic; the sequence is YLQN. The chain crosses the membrane as a helical span at residues 208–228; that stretch reads ILGIFKIGIVLFISITGWVAL. Residues 229–293 are Extracellular-facing; sequence GGGLKDGYQS…VRTLKIAGPT (65 aa). The helical transmembrane segment at 294-314 threads the bilayer; the sequence is SMVFLAIIYIFVNIAYFAVVP. At 315–340 the chain is on the cytoplasmic side; sequence KDKLISSKLILAADFFDIVFGGQAKR. Residues 341 to 361 traverse the membrane as a helical segment; the sequence is AAAALVGLSALGNVLSVIFSQ. Topologically, residues 362 to 418 are extracellular; that stretch reads GRIIQQLGREGVLPFSNFFASSKPFNSPMVGLFQHFIVCTVTILAPPPGDAYLLVQN. A helical transmembrane segment spans residues 419 to 439; it reads LISYPMNIINFAISAGLLWIY. The Cytoplasmic portion of the chain corresponds to 440–455; sequence WQRRQGKIEWNPPIKA. A helical transmembrane segment spans residues 456 to 476; sequence GVFVTGFFTLSNLYLIIAPYV. The Extracellular portion of the chain corresponds to 477–490; that stretch reads PPSNGESVYSSMPY. Residues 491–511 traverse the membrane as a helical segment; the sequence is WIHCVIAWGIFFFGGVYYVVW. Topologically, residues 512-574 are cytoplasmic; sequence AQLLPRWGHY…HYKSEQEKSL (63 aa). The residue at position 552 (Thr552) is a Phosphothreonine. Position 573 is a phosphoserine (Ser573).

It to yeast low affinity methionine permease (MUP3).

Its subcellular location is the membrane. In terms of biological role, high affinity permease for methionine. The chain is High-affinity methionine permease (MUP1) from Saccharomyces cerevisiae (strain ATCC 204508 / S288c) (Baker's yeast).